A 1717-amino-acid chain; its full sequence is Protein MON2 homolog (1717 aa).

Ser2 carries the post-translational modification N-acetylserine. Residues Ser205 and Ser537 each carry the phosphoserine modification. The segment at 511 to 538 is disordered; it reads ETECQTTTEEGSSPTQSTEQQDLQSTSD. Residues 522–538 are compositionally biased toward polar residues; the sequence is SSPTQSTEQQDLQSTSD.

Belongs to the MON2 family. Homooligomer. Heterotrimer with ATP9A and DOP1B; this interaction is retromer-independent. Interacts with SNX3.

It is found in the early endosome membrane. Functionally, plays a role in regulating membrane trafficking of cargo proteins. Together with ATP9A and DOP1B, regulates SNX3 retromer-mediated endosomal sorting of WLS away from lysosomal degradation. The sequence is that of Protein MON2 homolog from Homo sapiens (Human).